A 355-amino-acid polypeptide reads, in one-letter code: Isopentenyl-diphosphate delta-isomerase (355 aa).

Position 6 to 7 (arginine 6 to lysine 7) interacts with substrate. Residues alanine 62–threonine 64, serine 93, and asparagine 122 each bind FMN. Glutamine 152 is a substrate binding site. Residue glutamate 153 participates in Mg(2+) binding. Residues lysine 184, threonine 214, glycine 258 to glycine 259, and alanine 280 to glycine 281 contribute to the FMN site.

Belongs to the IPP isomerase type 2 family. Homooctamer. Dimer of tetramers. FMN serves as cofactor. Requires NADPH as cofactor. The cofactor is Mg(2+).

It is found in the cytoplasm. It catalyses the reaction isopentenyl diphosphate = dimethylallyl diphosphate. In terms of biological role, involved in the biosynthesis of isoprenoids. Catalyzes the 1,3-allylic rearrangement of the homoallylic substrate isopentenyl (IPP) to its allylic isomer, dimethylallyl diphosphate (DMAPP). The protein is Isopentenyl-diphosphate delta-isomerase of Bacillus pumilus (strain SAFR-032).